Consider the following 144-residue polypeptide: 3-hydroxyacyl-[acyl-carrier-protein] dehydratase FabZ (144 aa).

Histidine 52 is a catalytic residue.

This sequence belongs to the thioester dehydratase family. FabZ subfamily.

It is found in the cytoplasm. It catalyses the reaction a (3R)-hydroxyacyl-[ACP] = a (2E)-enoyl-[ACP] + H2O. Involved in unsaturated fatty acids biosynthesis. Catalyzes the dehydration of short chain beta-hydroxyacyl-ACPs and long chain saturated and unsaturated beta-hydroxyacyl-ACPs. This chain is 3-hydroxyacyl-[acyl-carrier-protein] dehydratase FabZ, found in Syntrophomonas wolfei subsp. wolfei (strain DSM 2245B / Goettingen).